The sequence spans 658 residues: DNA mismatch repair protein MutL (658 aa).

The span at 114–130 shows a compositional bias: basic and acidic residues; the sequence is RQEDSSHATQVKAEDGK. The tract at residues 114–137 is disordered; it reads RQEDSSHATQVKAEDGKLSSPTAA.

It belongs to the DNA mismatch repair MutL/HexB family.

This protein is involved in the repair of mismatches in DNA. It is required for dam-dependent methyl-directed DNA mismatch repair. May act as a 'molecular matchmaker', a protein that promotes the formation of a stable complex between two or more DNA-binding proteins in an ATP-dependent manner without itself being part of a final effector complex. This chain is DNA mismatch repair protein MutL, found in Neisseria meningitidis serogroup C / serotype 2a (strain ATCC 700532 / DSM 15464 / FAM18).